A 113-amino-acid polypeptide reads, in one-letter code: Hydrogenase maturation factor HypA (113 aa).

Residue histidine 2 participates in Ni(2+) binding. Cysteine 73, cysteine 76, cysteine 89, and cysteine 92 together coordinate Zn(2+).

This sequence belongs to the HypA/HybF family.

Functionally, involved in the maturation of [NiFe] hydrogenases. Required for nickel insertion into the metal center of the hydrogenase. The sequence is that of Hydrogenase maturation factor HypA from Azorhizobium caulinodans (strain ATCC 43989 / DSM 5975 / JCM 20966 / LMG 6465 / NBRC 14845 / NCIMB 13405 / ORS 571).